The following is a 980-amino-acid chain: Vacuolar protein sorting-associated protein 11 homolog (980 aa).

One copy of the CHCR repeat lies at 407–554 (YKETIGMLEP…GRDLLIHARD (148 aa)). Residues 803–843 (CSACDTPLQLPTVHFLCKHAYHVHCFESYNMDGSDKCPACQ) form an RING-type; atypical zinc finger. Over residues 886–898 (TKKTKKSEAKKDP) the composition is skewed to basic and acidic residues. The segment at 886-980 (TKKTKKSEAK…APAPSTNPFD (95 aa)) is disordered. 2 stretches are compositionally biased toward polar residues: residues 917–937 (TTIS…SRQR) and 947–960 (TNPF…TRLS).

Belongs to the VPS11 family. Probable core component of at least two putative endosomal tethering complexes, the homotypic fusion and vacuole protein sorting (HOPS) complex and the class C core vacuole/endosome tethering (CORVET) complex. Their common core is composed of the class C Vps proteins vps-11, vps-16 and vps-18, which in HOPS further associates with vps-33.1, vps-39 and vps-41 and in CORVET with vps-8 and vps-33.2.

It localises to the late endosome membrane. The protein resides in the lysosome membrane. In terms of biological role, plays a role in vesicle-mediated protein trafficking to lysosomal compartments including the endocytic membrane transport pathways. Believed to act as a core component of the putative HOPS and CORVET endosomal tethering complexes which are proposed to be involved in the rab-5-to-rab-7 endosome conversion probably implicating sand-1, and via binding SNAREs and SNARE complexes to mediate tethering and docking events during SNARE-mediated membrane fusion. The HOPS complex is proposed to be recruited to Rab7 on the late endosomal membrane and to regulate late endocytic, phagocytic and autophagic traffic towards lysosomes. Within the HOPS complex, contributes to the normal development of gut granules in embryonic and adult intestinal cells. The CORVET complex is proposed to function as a Rab5 effector to mediate early endosome fusion probably in specific endosome subpopulations. Required for fusion of endosomes and autophagosomes with lysosomes. Involved in cargo transport from early to late endosomes and required for the transition from early to late endosomes. Possibly has a role in clearance of apoptotic cells during programmed cell death. The protein is Vacuolar protein sorting-associated protein 11 homolog of Caenorhabditis elegans.